Here is a 312-residue protein sequence, read N- to C-terminus: Glycerol-3-phosphate phosphatase (312 aa).

Aspartate 30 serves as the catalytic Nucleophile. Aspartate 30, aspartate 32, and aspartate 251 together coordinate Mg(2+). Aspartate 32 acts as the Proton donor in catalysis.

Belongs to the HAD-like hydrolase superfamily. CbbY/CbbZ/Gph/YieH family. As to quaternary structure, homodimer. The cofactor is Mg(2+).

It carries out the reaction O-phospho-L-tyrosyl-[protein] + H2O = L-tyrosyl-[protein] + phosphate. The enzyme catalyses sn-glycerol 1-phosphate + H2O = glycerol + phosphate. The catalysed reaction is sn-glycerol 3-phosphate + H2O = glycerol + phosphate. Functionally, glycerol-3-phosphate phosphatase hydrolyzing glycerol-3-phosphate into glycerol. Thereby, regulates the cellular levels of glycerol-3-phosphate a metabolic intermediate of glucose, lipid and energy metabolism. Was also shown to have a 2-phosphoglycolate phosphatase activity and a tyrosine-protein phosphatase activity. However, their physiological relevance is unclear. In vitro, also has a phosphatase activity toward ADP, ATP, GDP and GTP. In Gallus gallus (Chicken), this protein is Glycerol-3-phosphate phosphatase.